The following is a 198-amino-acid chain: Ciliary neurotrophic factor (198 aa).

The protein belongs to the CNTF family. In terms of tissue distribution, nervous system.

It localises to the cytoplasm. In terms of biological role, CNTF is a survival factor for various neuronal cell types. Seems to prevent the degeneration of motor axons after axotomy. The protein is Ciliary neurotrophic factor (Cntf) of Mus musculus (Mouse).